The chain runs to 120 residues: FK506-binding protein 1B (120 aa).

The segment at 1-24 (MNPPQGVTKTILRPGNGRDSPHTG) is disordered. Residues 24–120 (GDTVIIDYTG…LVLYVCSPAG (97 aa)) enclose the PPIase FKBP-type domain.

This sequence belongs to the FKBP-type PPIase family. FKBP1 subfamily.

The enzyme catalyses [protein]-peptidylproline (omega=180) = [protein]-peptidylproline (omega=0). In terms of biological role, PPIases accelerate the folding of proteins. It catalyzes the cis-trans isomerization of proline imidic peptide bonds in oligopeptides. This chain is FK506-binding protein 1B (FKBP3), found in Emericella nidulans (strain FGSC A4 / ATCC 38163 / CBS 112.46 / NRRL 194 / M139) (Aspergillus nidulans).